The sequence spans 345 residues: uncharacterized protein (345 aa).

A CNNM transmembrane domain is found at 1–198; the sequence is MDVLSAVLLA…LSEGLLDHEE (198 aa). The next 2 helical transmembrane spans lie at 3–23 and 95–115; these read VLSAVLLALLLIGANAFFVGA and VPPALLHTLSLAIVVALHVLL. 2 CBS domains span residues 217 to 280 and 285 to 342; these read AVPL…PQTV and VVRP…MRDG. A helical transmembrane segment spans residues 312–332; that stretch reads LALVTADNGSVVGMVALEDVV.

This sequence belongs to the TerC family.

The protein localises to the cell membrane. This is an uncharacterized protein from Mycobacterium tuberculosis (strain ATCC 25618 / H37Rv).